Here is a 573-residue protein sequence, read N- to C-terminus: (R)-mandelonitrile lyase 3 (573 aa).

Positions 1-27 are cleaved as a signal peptide; sequence MVKSTMSAVLLVLHIFVLHLQYSEVQS. A glycan (N-linked (GlcNAc...) asparagine) is linked at Asn30. Position 63–64 (63–64) interacts with FAD; it reads TA. N-linked (GlcNAc...) asparagine glycosylation occurs at Asn75. Residues 82-83, Val129, Thr133, and 137-140 each bind FAD; these read ER and NAGV. N-linked (GlcNAc...) asparagine glycans are attached at residues Asn145, Asn150, Asn162, and Asn218. An FAD-binding site is contributed by Val244. N-linked (GlcNAc...) asparagine glycans are attached at residues Asn252, Asn267, and Asn309. Position 356 (Cys356) interacts with substrate. 4 N-linked (GlcNAc...) asparagine glycosylation sites follow: Asn380, Asn402, Asn420, and Asn467. The cysteines at positions 427 and 478 are disulfide-linked. Tyr485 contributes to the substrate binding site. FAD contacts are provided by residues 486-487 and Gly515; that span reads WH. His487 acts as the Proton donor in catalysis. His525 (proton acceptor) is an active-site residue. 526-527 is a binding site for FAD; that stretch reads PQ.

Belongs to the GMC oxidoreductase family. Monomer. FAD serves as cofactor.

Its subcellular location is the vacuole. The protein localises to the aleurone grain. It catalyses the reaction (R)-mandelonitrile = benzaldehyde + hydrogen cyanide. Its function is as follows. Involved in cyanogenesis, the release of HCN from injured tissues. Catalyzes the stereospecific addition of HCN to a variety of aldehydes in vitro. It is a major seed constituent, and could have the additional role of a storage form for reduced nitrogen. The protein is (R)-mandelonitrile lyase 3 (MDL3) of Prunus serotina (Black cherry).